Here is a 373-residue protein sequence, read N- to C-terminus: Chaperone protein DnaJ (373 aa).

The J domain occupies 5-70; that stretch reads DFYATLGVAR…EKRAMYDQYG (66 aa). A CR-type zinc finger spans residues 134-212; sequence GVKKRINIPT…CRGAGRNKAV (79 aa). Positions 147, 150, 164, 167, 186, 189, 200, and 203 each coordinate Zn(2+). CXXCXGXG motif repeat units lie at residues 147-154, 164-171, 186-193, and 200-207; these read CDVCNGSG, CPTCKGSG, CPTCHGAG, and CVKCRGAG.

This sequence belongs to the DnaJ family. In terms of assembly, homodimer. It depends on Zn(2+) as a cofactor.

It localises to the cytoplasm. Its function is as follows. Participates actively in the response to hyperosmotic and heat shock by preventing the aggregation of stress-denatured proteins and by disaggregating proteins, also in an autonomous, DnaK-independent fashion. Unfolded proteins bind initially to DnaJ; upon interaction with the DnaJ-bound protein, DnaK hydrolyzes its bound ATP, resulting in the formation of a stable complex. GrpE releases ADP from DnaK; ATP binding to DnaK triggers the release of the substrate protein, thus completing the reaction cycle. Several rounds of ATP-dependent interactions between DnaJ, DnaK and GrpE are required for fully efficient folding. Also involved, together with DnaK and GrpE, in the DNA replication of plasmids through activation of initiation proteins. The sequence is that of Chaperone protein DnaJ from Neisseria meningitidis serogroup C (strain 053442).